Reading from the N-terminus, the 1604-residue chain is Ubiquitin carboxyl-terminal hydrolase 32 (1604 aa).

EF-hand domains are found at residues 91–126 (KDEE…VDGK), 228–263 (IRPS…CCRG), and 264–299 (PLAE…LLEV). Residues Asp241, Asn243, Asp245, His247, Glu252, Asp277, Asp279, Asp281, and Glu288 each contribute to the Ca(2+) site. The region spanning 369 to 585 (ATPEEEGQII…ANLALPRPVI (217 aa)) is the DUSP domain. The USP domain maps to 734-1567 (TGLSNLGNTC…SAYILFYEQQ (834 aa)). The Nucleophile role is filled by Cys743. Residue Tyr1173 is modified to Phosphotyrosine. Disordered stretches follow at residues 1343–1362 (KKVD…SKSP) and 1367–1431 (ANII…DASK). Phosphoserine is present on residues Ser1350, Ser1372, Ser1376, and Ser1454. Residues 1367–1399 (ANIISSPKGSPSSSRKSGTSCPSSKNSSPNSSP) are compositionally biased toward low complexity. Residue His1526 is the Proton acceptor of the active site. At Ser1588 the chain carries Phosphoserine. Cysteine methyl ester is present on Cys1601. The S-farnesyl cysteine moiety is linked to residue Cys1601. A propeptide spans 1602 to 1604 (VLQ) (removed in mature form).

This sequence belongs to the peptidase C19 family.

The protein localises to the golgi apparatus membrane. The catalysed reaction is Thiol-dependent hydrolysis of ester, thioester, amide, peptide and isopeptide bonds formed by the C-terminal Gly of ubiquitin (a 76-residue protein attached to proteins as an intracellular targeting signal).. Its function is as follows. Deubiquitinase that can remove conjugated ubiquitin from target proteins, such as RAB7A and LAMTOR1. Acts as a positive regulator of the mTORC1 signaling by mediating deubiquitination of LAMTOR1, thereby promoting the association between LAMTOR1 and the lysosomal V-ATPase complex and subsequent activation of the mTORC1 complex. In Homo sapiens (Human), this protein is Ubiquitin carboxyl-terminal hydrolase 32 (USP32).